The primary structure comprises 486 residues: MATFKDACYQYKKLNKLNNAVLKLGANDVWRPSTLTKRKGWCLDCCQHTDLTYCQGCLIYHVCEWCSQYNRCFLDDDPHLLRMRTFRNEITKSDLENLINMYNTLFPINKKIVHKFANTIKQHKCRNEYSTQWYNHFLMPITLQSLSIELDGDIYYIFGYYDDMHKINQTPFSFTNLISKYDMLLLDSINFDRMAFLPLTLQQEYALRYFSKSRFITERRKCIEILHFSDNILDNLHNPNFTLQVIRNCSNMSVEWNKACNIIRNISDYFDILKSSHTEFYNISPRCRMFTQYKLKIASKLIKPNYVASNHNSLATEVHNCKWCSINNNSIVWNDFRIKNVYNDIFNFIRALVKSNLYVGHCSSEEKIYESIKEVLNVCKENEWNMLVTEMFNQLEPIKLNENNYILLNYEINWNVMNVLINSIGKIPKILTLSDVILILRIIIYDWFDIRFMRNTPMTTFTVNKLKQLYEKDRTAEHDSRISDIE.

Positions 1-81 are RNA-binding; that stretch reads MATFKDACYQ…CFLDDDPHLL (81 aa). The zinc-binding domain stretch occupies residues 42–79; it reads CLDCCQHTDLTYCQGCLIYHVCEWCSQYNRCFLDDDPH. Residues 82–176 are important for cytoskeleton localization; that stretch reads RMRTFRNEIT…INQTPFSFTN (95 aa). Residues 317-486 are interaction with host IRF3; sequence EVHNCKWCSI…EHDSRISDIE (170 aa). Residues 480 to 483 carry the pLxIS motif motif; sequence SRIS.

This sequence belongs to the rotavirus NSP1 family. In terms of assembly, interacts (via C-terminus) with host IRF3; this interaction leads to IRF3 degradation. Interacts with host IRF7; this interaction leads to IRF7 degradation. Interacts with host CUL1 and CUL3.

Its subcellular location is the host cytoplasm. The protein resides in the host cytoskeleton. Plays a role in the inhibition of host innate immunity by inducing the degradation of key host factors required to activate interferon production such as IRF3, IRF5 or IRF7. Associates with components of cullin RING ligases (CRLs) including CUL1 or CUL3, which are essential multisubunit ubiquitination complexes, to modulate their activities. The chain is Non-structural protein 1 from Rotavirus A (strain RVA/Human/United States/DS-1/1976/G2P1B[4]) (RV-A).